The following is a 199-amino-acid chain: Recombination protein RecR (199 aa).

The C4-type zinc finger occupies 57–72 (CQSCRTFTEQSLCPIC). The region spanning 81 to 176 (GVICVVETPA…IISRIAHGVP (96 aa)) is the Toprim domain.

This sequence belongs to the RecR family.

May play a role in DNA repair. It seems to be involved in an RecBC-independent recombinational process of DNA repair. It may act with RecF and RecO. This chain is Recombination protein RecR, found in Shewanella denitrificans (strain OS217 / ATCC BAA-1090 / DSM 15013).